The chain runs to 1148 residues: Signal transducer and activator of transcription B (1148 aa).

Residues 1–36 (MEVTNNGSNNSSTIASTNPPTSPSTTSTSKSLPPLS) show a composition bias toward low complexity. Disordered stretches follow at residues 1–81 (MEVT…NNNN), 93–178 (SSSN…LSSS), 268–312 (NTNN…PSNG), 403–425 (KNNI…NSLL), and 453–645 (YDYN…KTVT). A compositionally biased stretch (polar residues) spans 37 to 47 (FLNSQWENKQS). Low complexity-rich tracts occupy residues 48–81 (NNNN…NNNN), 106–178 (NNNN…LSSS), and 268–298 (NTNN…NNNN). Over residues 466–517 (SNSSNNNSSNNNSNNNNNNNSNNNNNIIGSISPPHSSQLQQVSSPQQQQQQQ) the composition is skewed to low complexity. Residues 525-541 (SISSGSIKDLINSPNKE) are compositionally biased toward polar residues. The segment covering 544–557 (SKSQYPSSLSQSSS) has biased composition (low complexity). The segment covering 561–572 (MDTDVDSTDEFD) has biased composition (acidic residues). The segment covering 574–610 (GSNSNNNNNNNNNNNNNNNSNNSNNKKRNNSNNNNLG) has biased composition (low complexity). In terms of domain architecture, SH2 spans 997–1122 (WQNGFIFMFL…TIPVFKREPK (126 aa)).

It belongs to the transcription factor STAT family. Homodimer. Does not form heterodimers with other family members.

It is found in the nucleus. In terms of biological role, transcription factor that regulates gene expression during development. Required for optimal cell growth. The chain is Signal transducer and activator of transcription B (dstB) from Dictyostelium discoideum (Social amoeba).